The following is a 98-amino-acid chain: Small ribosomal subunit protein bS6 (98 aa).

Belongs to the bacterial ribosomal protein bS6 family.

Binds together with bS18 to 16S ribosomal RNA. This chain is Small ribosomal subunit protein bS6, found in Levilactobacillus brevis (strain ATCC 367 / BCRC 12310 / CIP 105137 / JCM 1170 / LMG 11437 / NCIMB 947 / NCTC 947) (Lactobacillus brevis).